Consider the following 62-residue polypeptide: MFTSKKSLLLLFFLGTINLSLCEEERDADEEERRDDPDEMNVEVEKRFLPLVGKILSGLIGK.

The N-terminal stretch at 1–22 is a signal peptide; sequence MFTSKKSLLLLFFLGTINLSLC. The propeptide occupies 23–45; that stretch reads EEERDADEEERRDDPDEMNVEVE. I60 carries the post-translational modification Isoleucine amide.

As to expression, expressed by the skin glands.

The protein localises to the secreted. Antimicrobial activity against the Gram-positive bacterium S.aureus. In Lithobates palustris (Pickerel frog), this protein is Temporin-1PLa.